The sequence spans 584 residues: Glycosyltransferase family 92 protein Os08g0121900 (584 aa).

Positions 1–10 (MALAAKERKL) are enriched in basic and acidic residues. A disordered region spans residues 1–33 (MALAAKERKLSRLGSKGSGGGGGGGSFGARGQR). The span at 16–28 (KGSGGGGGGGSFG) shows a compositional bias: gly residues. The helical transmembrane segment at 43–63 (FAAFFAFLFAGAVLFGAAHVI) threads the bilayer. The 212-residue stretch at 314–525 (HSMCVCTMLR…DKFSGRVATY (212 aa)) folds into the GT92 domain.

It belongs to the glycosyltransferase 92 family.

It localises to the membrane. The sequence is that of Glycosyltransferase family 92 protein Os08g0121900 from Oryza sativa subsp. japonica (Rice).